Here is a 424-residue protein sequence, read N- to C-terminus: Adenylosuccinate synthetase (424 aa).

GTP is bound by residues Gly-12–Lys-18 and Gly-40–Thr-42. Asp-13 acts as the Proton acceptor in catalysis. Mg(2+)-binding residues include Asp-13 and Gly-40. Residues Asp-13 to Lys-16, Asn-38 to His-41, Thr-130, Arg-144, Asn-220, Thr-235, and Arg-299 contribute to the IMP site. Residue His-41 is the Proton donor of the active site. Val-295–Arg-301 provides a ligand contact to substrate. Residues Arg-301, Lys-327–Asp-329, and Gly-412–Gly-414 each bind GTP.

The protein belongs to the adenylosuccinate synthetase family. Homodimer. The cofactor is Mg(2+).

The protein resides in the cytoplasm. The enzyme catalyses IMP + L-aspartate + GTP = N(6)-(1,2-dicarboxyethyl)-AMP + GDP + phosphate + 2 H(+). Its pathway is purine metabolism; AMP biosynthesis via de novo pathway; AMP from IMP: step 1/2. Functionally, plays an important role in the de novo pathway and in the salvage pathway of purine nucleotide biosynthesis. Catalyzes the first committed step in the biosynthesis of AMP from IMP. In Aspergillus flavus (strain ATCC 200026 / FGSC A1120 / IAM 13836 / NRRL 3357 / JCM 12722 / SRRC 167), this protein is Adenylosuccinate synthetase.